The primary structure comprises 324 residues: Protoheme IX farnesyltransferase 2 (324 aa).

A run of 9 helical transmembrane segments spans residues 39–59, 63–83, 115–135, 137–157, 166–186, 192–212, 239–259, 260–280, and 302–322; these read LIKP…MLLA, IPSP…AGSA, HALV…WATT, LLSA…YTLV, IVWG…GVTG, ALVM…SLAM, IVVF…ATGW, LYTA…HRLH, and LMIV…VLGW.

This sequence belongs to the UbiA prenyltransferase family. Protoheme IX farnesyltransferase subfamily.

Its subcellular location is the cell membrane. The catalysed reaction is heme b + (2E,6E)-farnesyl diphosphate + H2O = Fe(II)-heme o + diphosphate. It participates in porphyrin-containing compound metabolism; heme O biosynthesis; heme O from protoheme: step 1/1. In terms of biological role, converts heme B (protoheme IX) to heme O by substitution of the vinyl group on carbon 2 of heme B porphyrin ring with a hydroxyethyl farnesyl side group. This is Protoheme IX farnesyltransferase 2 from Saccharopolyspora erythraea (strain ATCC 11635 / DSM 40517 / JCM 4748 / NBRC 13426 / NCIMB 8594 / NRRL 2338).